A 111-amino-acid polypeptide reads, in one-letter code: uncharacterized protein (111 aa).

A helical transmembrane segment spans residues 20–39 (PVDTTGLIFFAVFASSFVLY).

It localises to the membrane. This is an uncharacterized protein from Saccharomyces cerevisiae (strain ATCC 204508 / S288c) (Baker's yeast).